A 1295-amino-acid polypeptide reads, in one-letter code: Phosphoribosylformylglycinamidine synthase (1295 aa).

The disordered stretch occupies residues 305–327 (WPGAATGSGGEIRDEGATGRGAK). ATP is bound by residues 307-318 (GAATGSGGEIRD) and Ala678. 3 residues coordinate Mg(2+): Glu718, Asn722, and Asp884. An ATP-binding site is contributed by Ser886. One can recognise a Glutamine amidotransferase type-1 domain in the interval 1042–1295 (VAVLREQGVN…IFRNARKQLG (254 aa)). Residue Cys1135 is the Nucleophile of the active site. Active-site residues include His1260 and Glu1262.

This sequence in the N-terminal section; belongs to the FGAMS family. As to quaternary structure, monomer.

The protein resides in the cytoplasm. The enzyme catalyses N(2)-formyl-N(1)-(5-phospho-beta-D-ribosyl)glycinamide + L-glutamine + ATP + H2O = 2-formamido-N(1)-(5-O-phospho-beta-D-ribosyl)acetamidine + L-glutamate + ADP + phosphate + H(+). Its pathway is purine metabolism; IMP biosynthesis via de novo pathway; 5-amino-1-(5-phospho-D-ribosyl)imidazole from N(2)-formyl-N(1)-(5-phospho-D-ribosyl)glycinamide: step 1/2. Its function is as follows. Phosphoribosylformylglycinamidine synthase involved in the purines biosynthetic pathway. Catalyzes the ATP-dependent conversion of formylglycinamide ribonucleotide (FGAR) and glutamine to yield formylglycinamidine ribonucleotide (FGAM) and glutamate. The protein is Phosphoribosylformylglycinamidine synthase of Escherichia coli O6:K15:H31 (strain 536 / UPEC).